The chain runs to 385 residues: Glucans biosynthesis protein C (385 aa).

A run of 10 helical transmembrane segments spans residues 17–37, 60–80, 91–111, 137–157, 173–193, 212–232, 239–259, 274–294, 311–331, and 338–358; these read AWLM…SHTW, MQVF…RYPL, VGIP…IMLQ, ISHL…VWIF, KFSM…YAVI, FIVM…LAFI, LFTT…VAYL, TESV…FSFG, ASLF…AYIT, and WLGF…LYEI.

The protein belongs to the acyltransferase 3 family. OpgC subfamily.

It is found in the cell membrane. The protein operates within glycan metabolism; osmoregulated periplasmic glucan (OPG) biosynthesis. Functionally, necessary for the succinyl substitution of periplasmic glucans. Could catalyze the transfer of succinyl residues from the cytoplasmic side of the membrane to the nascent glucan backbones on the periplasmic side of the membrane. In Escherichia coli (strain SMS-3-5 / SECEC), this protein is Glucans biosynthesis protein C.